The chain runs to 197 residues: MGQHLSEESNKVEIDVAELQEWYKKFVVECPSGTLFMHEFKRFFGVQDNQEAADYVEHMFRAFDKNGDNTIDFLEYVAALNLVLRGKLEHKLKWTFKVYDRDGNGCIDKTELLEIVESIYNLKKVCRQGQDDRIPLLSPEQVVDRIFQLVDENGDGQLSLDEFIDGARKDKWVMKMLQMDVSPGSWINEQRRKSALF.

Residue glycine 2 is the site of N-myristoyl glycine attachment. EF-hand domains are found at residues 15 to 50 (DVAE…QDNQ), 51 to 86 (EAAD…VLRG), 87 to 122 (KLEH…IYNL), and 138 to 173 (SPEQ…DKWV). Residues aspartate 64, asparagine 66, aspartate 68, threonine 70, glutamate 75, aspartate 100, aspartate 102, asparagine 104, cysteine 106, glutamate 111, aspartate 151, asparagine 153, aspartate 155, glutamine 157, and glutamate 162 each coordinate Ca(2+).

In terms of tissue distribution, low expression in retina.

Functionally, stimulates guanylyl cyclase 1 (GC1) and GC2 when free calcium ions concentration is low and inhibits guanylyl cyclases when free calcium ions concentration is elevated. This Ca(2+)-sensitive regulation of guanylyl cyclase (GC) is a key event in recovery of the dark state of rod photoreceptors following light exposure. The sequence is that of Guanylyl cyclase-activating protein 2 (GUCA1B) from Lithobates pipiens (Northern leopard frog).